The following is a 237-amino-acid chain: MPVTQDVFNEDGKFMRKIRSFVRREGRLTKGQEKALEELWPVMGIDFAPEPLDLVALFGREAPVVLEIGFGMGASLVEMAKNAPEKNFIGIEVHSPGVGACLGTAQEAGVTNLRVICHDAVEVLEHMIPNGSLACLQLFFPDPWHKSRHHKRRIVQPAFVQDIRQKLAIGGVFHMATDWENYAEHMLEVMSAAEGYENTSATGNWVPRPDWRPLTKFEQRGHRLGHGVWDLIFKRVN.

Glutamate 67, glutamate 92, aspartate 119, and aspartate 142 together coordinate S-adenosyl-L-methionine. The active site involves aspartate 142. Residues lysine 146, aspartate 178, and threonine 215–glutamate 218 each bind substrate.

It belongs to the class I-like SAM-binding methyltransferase superfamily. TrmB family.

The enzyme catalyses guanosine(46) in tRNA + S-adenosyl-L-methionine = N(7)-methylguanosine(46) in tRNA + S-adenosyl-L-homocysteine. It functions in the pathway tRNA modification; N(7)-methylguanine-tRNA biosynthesis. Functionally, catalyzes the formation of N(7)-methylguanine at position 46 (m7G46) in tRNA. The protein is tRNA (guanine-N(7)-)-methyltransferase of Aeromonas hydrophila subsp. hydrophila (strain ATCC 7966 / DSM 30187 / BCRC 13018 / CCUG 14551 / JCM 1027 / KCTC 2358 / NCIMB 9240 / NCTC 8049).